Here is a 309-residue protein sequence, read N- to C-terminus: Pyridoxal 5'-phosphate synthase subunit PDX1.3 (309 aa).

Residue M1 is modified to N-acetylmethionine. D40 serves as a coordination point for D-ribose 5-phosphate. The active-site Schiff-base intermediate with D-ribose 5-phosphate is the K97. G169 contacts D-ribose 5-phosphate. R181 contacts D-glyceraldehyde 3-phosphate. Residues G230 and 251–252 contribute to the D-ribose 5-phosphate site; that span reads GS.

This sequence belongs to the PdxS/SNZ family. In terms of assembly, homodimer or heterodimer with PDX1.1 or PDX1.2. Interacts with PDX2. In terms of tissue distribution, expressed in cotyledons, rapidly dividing root stele tissues, stems, leaves, flowers, mature pollen, and siliques.

It localises to the cytoplasm. Its subcellular location is the cell membrane. The protein resides in the membrane. The catalysed reaction is aldehydo-D-ribose 5-phosphate + D-glyceraldehyde 3-phosphate + L-glutamine = pyridoxal 5'-phosphate + L-glutamate + phosphate + 3 H2O + H(+). It functions in the pathway cofactor biosynthesis; pyridoxal 5'-phosphate biosynthesis. In terms of biological role, catalyzes the formation of pyridoxal 5'-phosphate from ribose 5-phosphate (RBP), glyceraldehyde 3-phosphate (G3P) and ammonia. The ammonia is provided by PDX2. Can also use ribulose 5-phosphate and dihydroxyacetone phosphate as substrates, resulting from enzyme-catalyzed isomerization of RBP and G3P, respectively. Also plays an indirect role in resistance to singlet oxygen-generating photosensitizers. The polypeptide is Pyridoxal 5'-phosphate synthase subunit PDX1.3 (PDX13) (Arabidopsis thaliana (Mouse-ear cress)).